Here is a 256-residue protein sequence, read N- to C-terminus: MTPGIRPLVAGNWKMNGTSASLNELRMIGNGFMSGLDAETEALVCVPATLLSHAAEILSRTPVHAGGEDCHTKESGAYTGCISAEMLKDAGASHVIVGHSECREQRGEDDATVQAKAAAAWRAGLVAIICIGETQQQREAGATLEVLSRQVAGSVPPSATPSNTVIAYEPVWAIGTGLTPTAADVAEAHAHIRERLSEKLGASAAKTRILYGGSVKPSNAVELLGVRNVDGALVGGASLKAADFLGIAEAYRSISG.

A substrate-binding site is contributed by 12 to 14 (NWK). Catalysis depends on H99, which acts as the Electrophile. The active-site Proton acceptor is the E169. Residues G175, S214, and 235–236 (GG) each bind substrate.

It belongs to the triosephosphate isomerase family. As to quaternary structure, homodimer.

The protein localises to the cytoplasm. The enzyme catalyses D-glyceraldehyde 3-phosphate = dihydroxyacetone phosphate. The protein operates within carbohydrate biosynthesis; gluconeogenesis. It functions in the pathway carbohydrate degradation; glycolysis; D-glyceraldehyde 3-phosphate from glycerone phosphate: step 1/1. Its function is as follows. Involved in the gluconeogenesis. Catalyzes stereospecifically the conversion of dihydroxyacetone phosphate (DHAP) to D-glyceraldehyde-3-phosphate (G3P). This is Triosephosphate isomerase from Mesorhizobium japonicum (strain LMG 29417 / CECT 9101 / MAFF 303099) (Mesorhizobium loti (strain MAFF 303099)).